The sequence spans 137 residues: Putative pre-16S rRNA nuclease (137 aa).

This sequence belongs to the YqgF nuclease family.

It is found in the cytoplasm. Its function is as follows. Could be a nuclease involved in processing of the 5'-end of pre-16S rRNA. This chain is Putative pre-16S rRNA nuclease, found in Mycoplasmopsis synoviae (strain 53) (Mycoplasma synoviae).